A 212-amino-acid polypeptide reads, in one-letter code: MPTREIRHPLIRHKLGLMRRADISTKNFRELAQEVGALLTYEATKDLPLETYDIEGWAGTVQVEKIAGKKITVVPILRAGIGMLEGVLSLIPGAKVSAVGVARNEETLQAHTYLEKLVPEINERLAMIIDPMLATGSSMVATIDLLKKAGCKDIRAMVLVAAPEGIAAVEKAHPDVQIYTASIDERLNEHGYIIPGLGDAGDKIFGTKQKDA.

Residues R78, R103, and 130–138 each bind 5-phospho-alpha-D-ribose 1-diphosphate; that span reads DPMLATGSS. Residues I193 and 198–200 contribute to the uracil site; that span reads GDA. D199 is a binding site for 5-phospho-alpha-D-ribose 1-diphosphate.

This sequence belongs to the UPRTase family. Mg(2+) serves as cofactor.

It catalyses the reaction UMP + diphosphate = 5-phospho-alpha-D-ribose 1-diphosphate + uracil. It participates in pyrimidine metabolism; UMP biosynthesis via salvage pathway; UMP from uracil: step 1/1. With respect to regulation, allosterically activated by GTP. Its function is as follows. Catalyzes the conversion of uracil and 5-phospho-alpha-D-ribose 1-diphosphate (PRPP) to UMP and diphosphate. The sequence is that of Uracil phosphoribosyltransferase from Pseudomonas fluorescens (strain SBW25).